The primary structure comprises 316 residues: DNA-directed RNA polymerase subunit alpha (316 aa).

The tract at residues 1–230 is alpha N-terminal domain (alpha-NTD); the sequence is MIEFEKPNIH…EHLAMFVDLT (230 aa). Positions 247–316 are alpha C-terminal domain (alpha-CTD); that stretch reads KEKMLEMTIE…DLGLSLRKED (70 aa).

The protein belongs to the RNA polymerase alpha chain family. Homodimer. The RNAP catalytic core consists of 2 alpha, 1 beta, 1 beta' and 1 omega subunit. When a sigma factor is associated with the core the holoenzyme is formed, which can initiate transcription.

The catalysed reaction is RNA(n) + a ribonucleoside 5'-triphosphate = RNA(n+1) + diphosphate. Functionally, DNA-dependent RNA polymerase catalyzes the transcription of DNA into RNA using the four ribonucleoside triphosphates as substrates. The polypeptide is DNA-directed RNA polymerase subunit alpha (Levilactobacillus brevis (strain ATCC 367 / BCRC 12310 / CIP 105137 / JCM 1170 / LMG 11437 / NCIMB 947 / NCTC 947) (Lactobacillus brevis)).